The following is a 306-amino-acid chain: Ornithine carbamoyltransferase (306 aa).

Residues 53–56 (STRT), Gln-80, Arg-104, and 131–134 (HPCQ) each bind carbamoyl phosphate. L-ornithine-binding positions include Asn-162, Asp-219, and 223 to 224 (SM). Residues 259 to 260 (CL) and Arg-287 contribute to the carbamoyl phosphate site.

This sequence belongs to the aspartate/ornithine carbamoyltransferase superfamily. OTCase family.

Its subcellular location is the cytoplasm. It catalyses the reaction carbamoyl phosphate + L-ornithine = L-citrulline + phosphate + H(+). The protein operates within amino-acid degradation; L-arginine degradation via ADI pathway; carbamoyl phosphate from L-arginine: step 2/2. Reversibly catalyzes the transfer of the carbamoyl group from carbamoyl phosphate (CP) to the N(epsilon) atom of ornithine (ORN) to produce L-citrulline. This Acinetobacter baumannii (strain AYE) protein is Ornithine carbamoyltransferase.